A 157-amino-acid chain; its full sequence is Transmembrane protein 50A (157 aa).

S2 is modified (N-acetylserine). At S2 the chain carries Phosphoserine. Helical transmembrane passes span 26-46 (IAAGVLFFTGWWIIIDAAVMY), 58-78 (TCGVIATIAFLMINAVSNGQV), 95-115 (IWLFIGFMLAFGSLIASMWIL), and 126-146 (VVYPGIAVFFQNAFIFFGGLV).

The protein belongs to the UPF0220 family.

It localises to the membrane. This is Transmembrane protein 50A (Tmem50a) from Mus musculus (Mouse).